The chain runs to 82 residues: Cyclin-dependent protein kinase inhibitor SMR5 (82 aa).

Residues 1-26 (MEEKNYDDGDTVTVDDDYQMGCTTPT) are disordered. The span at 8 to 18 (DGDTVTVDDDY) shows a compositional bias: acidic residues.

Interacts with CDKA-1 and D-type cyclins. Expressed in columella cells in the roots and in root meristems after induction.

Probable cyclin-dependent protein kinase (CDK) inhibitor that functions as a repressor of mitosis in the endoreduplication cell cycle. Acts as a potent cell cycle inhibitor, regulating a hydroxyurea-dependent checkpoint in leaves. Essential to activate a high-light-dependent cell cycle checkpoint. The protein is Cyclin-dependent protein kinase inhibitor SMR5 of Arabidopsis thaliana (Mouse-ear cress).